We begin with the raw amino-acid sequence, 322 residues long: Ribosomal RNA large subunit methyltransferase F (322 aa).

The protein belongs to the methyltransferase superfamily. METTL16/RlmF family.

The protein resides in the cytoplasm. It carries out the reaction adenosine(1618) in 23S rRNA + S-adenosyl-L-methionine = N(6)-methyladenosine(1618) in 23S rRNA + S-adenosyl-L-homocysteine + H(+). Specifically methylates the adenine in position 1618 of 23S rRNA. This chain is Ribosomal RNA large subunit methyltransferase F, found in Cytophaga hutchinsonii (strain ATCC 33406 / DSM 1761 / CIP 103989 / NBRC 15051 / NCIMB 9469 / D465).